The sequence spans 472 residues: 3-isopropylmalate dehydratase large subunit (472 aa).

Cys347, Cys407, and Cys410 together coordinate [4Fe-4S] cluster.

It belongs to the aconitase/IPM isomerase family. LeuC type 1 subfamily. In terms of assembly, heterodimer of LeuC and LeuD. [4Fe-4S] cluster is required as a cofactor.

The catalysed reaction is (2R,3S)-3-isopropylmalate = (2S)-2-isopropylmalate. It participates in amino-acid biosynthesis; L-leucine biosynthesis; L-leucine from 3-methyl-2-oxobutanoate: step 2/4. Functionally, catalyzes the isomerization between 2-isopropylmalate and 3-isopropylmalate, via the formation of 2-isopropylmaleate. This is 3-isopropylmalate dehydratase large subunit from Parasynechococcus marenigrum (strain WH8102).